The chain runs to 112 residues: Integration host factor subunit alpha (112 aa).

This sequence belongs to the bacterial histone-like protein family. As to quaternary structure, heterodimer of an alpha and a beta chain.

Its function is as follows. This protein is one of the two subunits of integration host factor, a specific DNA-binding protein that functions in genetic recombination as well as in transcriptional and translational control. The polypeptide is Integration host factor subunit alpha (Rhizobium rhizogenes (strain K84 / ATCC BAA-868) (Agrobacterium radiobacter)).